A 124-amino-acid polypeptide reads, in one-letter code: Chorion class high-cysteine HCA protein 12 (124 aa).

An N-terminal signal peptide occupies residues 1-21; it reads MFTFALLLLCVQGCLIQNVYG. The segment at 22 to 35 is left arm; sequence QCCGCGCGGGCGCG. Residues 36–83 are central domain; that stretch reads CYGGEGDGNVNVCGELPVCGETLVCGRVPICGGVCFKGPACASGCVSI. The tract at residues 84 to 124 is right arm (Gly- and Cys-rich tandem repeats); the sequence is CGRCCGCGCGGCGGCGCGCGGCGCGCGGCGGCGCGRRCCCC.

This sequence belongs to the chorion protein family.

This protein is one of many from the eggshell of the silk moth. This chain is Chorion class high-cysteine HCA protein 12, found in Bombyx mori (Silk moth).